A 60-amino-acid chain; its full sequence is Mastoparan-A (60 aa).

The signal sequence occupies residues 1–27; it reads MKNTILILFTAFIALLGFFGMSAEALA. AXPX repeat units follow at residues 27-30, 31-34, 35-38, and 41-43; these read ADPI, ADPL, AGPN, and ADP. The propeptide occupies 28-45; that stretch reads DPIADPLAGPNAEADPEA. An Isoleucine amide modification is found at Ile59.

This sequence belongs to the MCD family. Mastoparan subfamily. Expressed by the venom gland.

It is found in the secreted. The protein resides in the target cell membrane. Functionally, antimicrobial and mast cell degranulating peptide. Has broad spectrum antibacterial activity against both Gram-positive and Gram-negative bacteria (S.aureus MIC=32-64 ug/ml, S.xylosus MIC=2 ug/ml, S.alactolyticus MIC=12 ug/ml, C.koseri MIC=4 ug/ml, E.coli MIC=8 ug/ml, K.pneumoniae MIC=32 ug/ml, P.aerugiosa MIC=192 ug/ml, S.choleraesuis MIC=32 ug/ml, S.typhimurium MIC=32 ug/ml, V.parahamelytics MIC=16 ug/ml). Affects membrane permeability of E.coli. Shows hemolytic activities on sheep, chicken and human erythrocytes. Its mast cell degranulation activity may be related to the activation of G-protein coupled receptors in mast cells as well as interaction with other proteins located in cell endosomal membranes in the mast cells. This is Mastoparan-A from Vespa analis (Yellow-vented hornet).